The primary structure comprises 862 residues: Leucine--tRNA ligase (862 aa).

The short motif at 44–54 is the 'HIGH' region element; it reads PYPSGRIHMGH. The 'KMSKS' region signature appears at 622 to 626; sequence KMSKS. K625 serves as a coordination point for ATP.

The protein belongs to the class-I aminoacyl-tRNA synthetase family.

It localises to the cytoplasm. It catalyses the reaction tRNA(Leu) + L-leucine + ATP = L-leucyl-tRNA(Leu) + AMP + diphosphate. The chain is Leucine--tRNA ligase from Rhodospirillum rubrum (strain ATCC 11170 / ATH 1.1.1 / DSM 467 / LMG 4362 / NCIMB 8255 / S1).